The following is an 81-amino-acid chain: Small ribosomal subunit protein bS18 (81 aa).

It belongs to the bacterial ribosomal protein bS18 family. Part of the 30S ribosomal subunit. Forms a tight heterodimer with protein bS6.

Binds as a heterodimer with protein bS6 to the central domain of the 16S rRNA, where it helps stabilize the platform of the 30S subunit. The sequence is that of Small ribosomal subunit protein bS18 from Syntrophobacter fumaroxidans (strain DSM 10017 / MPOB).